A 155-amino-acid chain; its full sequence is Keratin-associated protein 4-7 (155 aa).

20 repeat units span residues 5–9, 24–28, 29–33, 34–38, 44–48, 49–53, 54–58, 59–63, 64–68, 69–73, 74–78, 79–83, 84–88, 89–93, 94–98, 99–103, 104–108, 109–113, 114–118, and 119–123. The 20 X 5 AA repeats of C-C-[GIKRQVHEML]-[SPTRV]-[STVQRCP] stretch occupies residues 5–123; the sequence is CCGSVCSDQG…CCRPCCCLRP (119 aa).

It belongs to the KRTAP type 4 family. Interacts with hair keratins. As to expression, expressed in the hair follicles.

In terms of biological role, in the hair cortex, hair keratin intermediate filaments are embedded in an interfilamentous matrix, consisting of hair keratin-associated proteins (KRTAP), which are essential for the formation of a rigid and resistant hair shaft through their extensive disulfide bond cross-linking with abundant cysteine residues of hair keratins. The matrix proteins include the high-sulfur and high-glycine-tyrosine keratins. This chain is Keratin-associated protein 4-7 (KRTAP4-7), found in Homo sapiens (Human).